The primary structure comprises 497 residues: Probable cytosol aminopeptidase (497 aa).

Mn(2+)-binding residues include Lys-267 and Asp-272. Lys-279 is an active-site residue. Mn(2+)-binding residues include Asp-290, Asp-349, and Glu-351. Arg-353 is an active-site residue.

This sequence belongs to the peptidase M17 family. Requires Mn(2+) as cofactor.

Its subcellular location is the cytoplasm. The catalysed reaction is Release of an N-terminal amino acid, Xaa-|-Yaa-, in which Xaa is preferably Leu, but may be other amino acids including Pro although not Arg or Lys, and Yaa may be Pro. Amino acid amides and methyl esters are also readily hydrolyzed, but rates on arylamides are exceedingly low.. It catalyses the reaction Release of an N-terminal amino acid, preferentially leucine, but not glutamic or aspartic acids.. In terms of biological role, presumably involved in the processing and regular turnover of intracellular proteins. Catalyzes the removal of unsubstituted N-terminal amino acids from various peptides. The chain is Probable cytosol aminopeptidase from Nitrosomonas europaea (strain ATCC 19718 / CIP 103999 / KCTC 2705 / NBRC 14298).